Consider the following 176-residue polypeptide: Ferritin, middle subunit (176 aa).

A Ferritin-like diiron domain is found at 7–156; the sequence is QNYHHDCERA…DHITNLTKMD (150 aa). Fe cation contacts are provided by Glu24, Glu59, His62, Glu104, and Gln138.

This sequence belongs to the ferritin family. In terms of assembly, oligomer of 24 subunits. There are at least two types of subunits. The functional molecule forms a roughly spherical shell with a diameter of 12 nm and contains a central cavity into which the insoluble mineral iron core is deposited. As to expression, almost exclusively in the gonads.

It carries out the reaction 4 Fe(2+) + O2 + 4 H(+) = 4 Fe(3+) + 2 H2O. Stores iron in a soluble, non-toxic, readily available form. Important for iron homeostasis. Has ferroxidase activity. Iron is taken up in the ferrous form and deposited as ferric hydroxides after oxidation. The polypeptide is Ferritin, middle subunit (Salmo salar (Atlantic salmon)).